Consider the following 399-residue polypeptide: Coenzyme A biosynthesis bifunctional protein CoaBC (399 aa).

The interval 1–190 (MQSLAGKKIL…FAPKILVGKR (190 aa)) is phosphopantothenoylcysteine decarboxylase. C159 (proton donor) is an active-site residue. The tract at residues 191–399 (VLITAGPTRE…AVMHLIHEQM (209 aa)) is phosphopantothenate--cysteine ligase. CTP is bound by residues D279, K289, 307–310 (PDIV), F326, K340, and K344.

In the N-terminal section; belongs to the HFCD (homo-oligomeric flavin containing Cys decarboxylase) superfamily. The protein in the C-terminal section; belongs to the PPC synthetase family. Mg(2+) is required as a cofactor. The cofactor is FMN.

The catalysed reaction is N-[(R)-4-phosphopantothenoyl]-L-cysteine + H(+) = (R)-4'-phosphopantetheine + CO2. The enzyme catalyses (R)-4'-phosphopantothenate + L-cysteine + CTP = N-[(R)-4-phosphopantothenoyl]-L-cysteine + CMP + diphosphate + H(+). The protein operates within cofactor biosynthesis; coenzyme A biosynthesis; CoA from (R)-pantothenate: step 2/5. It participates in cofactor biosynthesis; coenzyme A biosynthesis; CoA from (R)-pantothenate: step 3/5. Functionally, catalyzes two sequential steps in the biosynthesis of coenzyme A. In the first step cysteine is conjugated to 4'-phosphopantothenate to form 4-phosphopantothenoylcysteine. In the second step the latter compound is decarboxylated to form 4'-phosphopantotheine. The chain is Coenzyme A biosynthesis bifunctional protein CoaBC from Vibrio cholerae serotype O1 (strain ATCC 39315 / El Tor Inaba N16961).